The following is a 570-amino-acid chain: Probable diguanylate cyclase DgcQ (570 aa).

The next 2 membrane-spanning stretches (helical) occupy residues 20 to 40 (FGPG…STLL) and 360 to 380 (IALT…WGVI). Residues 428-563 (QPFSVIQLDL…GRNRICASDA (136 aa)) enclose the GGDEF domain. Aspartate 436 contacts Mg(2+). The substrate site is built by asparagine 444, histidine 449, and aspartate 453. Glutamate 479 is a Mg(2+) binding site. The active-site Proton acceptor is glutamate 479.

Homodimer. Mg(2+) serves as cofactor.

The protein resides in the cell inner membrane. The catalysed reaction is 2 GTP = 3',3'-c-di-GMP + 2 diphosphate. Its pathway is glycan metabolism; bacterial cellulose biosynthesis. It functions in the pathway purine metabolism; 3',5'-cyclic di-GMP biosynthesis. Functionally, catalyzes the synthesis of cyclic-di-GMP (c-di-GMP) via the condensation of 2 GTP molecules. Cyclic-di-GMP is a second messenger which controls cell surface-associated traits in bacteria. Involved in the regulation of cellulose production. In Salmonella choleraesuis (strain SC-B67), this protein is Probable diguanylate cyclase DgcQ.